A 212-amino-acid chain; its full sequence is MKPFKKFTSRVVPLDRANVDTDAIIPKQFLKSIRRSGFGPYLFDEWRYLDRGEPDMDCSHRPLNPEFVLNLPCYAGARILLARKNFGCGSSREHAPWALEDYGFRAIIAPSFADIFYNNCFKNGILPIVLDEATVDRLFSEAGPGFELTVDLESQTVATPFGETFHFDVDASRKHRLLNGLDDIGLTLQHADAIRAYEAARRKSAPWLFAVP.

Belongs to the LeuD family. LeuD type 1 subfamily. In terms of assembly, heterodimer of LeuC and LeuD.

It carries out the reaction (2R,3S)-3-isopropylmalate = (2S)-2-isopropylmalate. Its pathway is amino-acid biosynthesis; L-leucine biosynthesis; L-leucine from 3-methyl-2-oxobutanoate: step 2/4. Its function is as follows. Catalyzes the isomerization between 2-isopropylmalate and 3-isopropylmalate, via the formation of 2-isopropylmaleate. In Methylococcus capsulatus (strain ATCC 33009 / NCIMB 11132 / Bath), this protein is 3-isopropylmalate dehydratase small subunit.